The sequence spans 271 residues: uncharacterized protein (271 aa).

It belongs to the HAD-like hydrolase superfamily.

This is an uncharacterized protein from Staphylococcus aureus.